A 464-amino-acid polypeptide reads, in one-letter code: MSSPLIPVILSGGNGTRLWPLSREEYPKQFLKLTDSISMLQSTISRLDSLNTSSPVVICNELHRFIVAEQLRHLNKLDNNIILEPSGRNTAPAICIAALILKMKHPNENPLMLVLPADHSVKKVKTFCNTIKSAIPFAEAGNLVSFGIKPTHPETGYGYIQKGKVLSDSDIYEVSEVRTFVEKPNLKTAESFIEKDEYYWNSGMYLFSVERYLQELSLYRPDIVKVCQETVKNIHYDMDFIRLDDKIFRNCPQESIDYAVMEKTKDAVVATMDIGWNDVGAWSSLWELGKKDSSGNVITGDIVCHETENSYIYTESGLVATIGIQDLVIIHTKDSLLVSRRDSVQNVKNIVQHLDLSGRKEHKEHREVFKSWGRCDSIDSSEKYHYQVKRITVNPSENYRCNYIITVRNIGVVVMGIAKLTVAEEIKILKENESVYIPAGIKHSLKILDNTTCVNRSLDRFLSC.

This sequence belongs to the mannose-6-phosphate isomerase type 2 family.

The catalysed reaction is alpha-D-mannose 1-phosphate + GTP + H(+) = GDP-alpha-D-mannose + diphosphate. It functions in the pathway nucleotide-sugar biosynthesis; GDP-alpha-D-mannose biosynthesis; GDP-alpha-D-mannose from alpha-D-mannose 1-phosphate (GTP route): step 1/1. The protein operates within bacterial outer membrane biogenesis; LPS O-antigen biosynthesis. Its function is as follows. Involved in GDP-mannose biosynthesis which serves as the activated sugar nucleotide precursor for mannose residues in cell surface polysaccharides. This enzyme participates in synthesis of the LPS O7 antigen. The chain is Mannose-1-phosphate guanylyltransferase (manC) from Escherichia coli.